A 365-amino-acid polypeptide reads, in one-letter code: Phospho-N-acetylmuramoyl-pentapeptide-transferase (365 aa).

Helical transmembrane passes span 2-22 (ISLI…TPLL), 51-71 (TLGG…SALY), 80-100 (PSWS…LGFI), 118-138 (GKFI…LILP), 167-187 (VAIV…TNAI), 196-216 (LAAG…FWEF), 234-254 (PLDL…FLWY), 256-276 (SNPA…GLFA), 277-297 (AMSI…LFVI), and 340-360 (FWMI…GDWV).

Belongs to the glycosyltransferase 4 family. MraY subfamily. Mg(2+) is required as a cofactor.

It is found in the cell membrane. The catalysed reaction is UDP-N-acetyl-alpha-D-muramoyl-L-alanyl-gamma-D-glutamyl-meso-2,6-diaminopimeloyl-D-alanyl-D-alanine + di-trans,octa-cis-undecaprenyl phosphate = di-trans,octa-cis-undecaprenyl diphospho-N-acetyl-alpha-D-muramoyl-L-alanyl-D-glutamyl-meso-2,6-diaminopimeloyl-D-alanyl-D-alanine + UMP. It participates in cell wall biogenesis; peptidoglycan biosynthesis. In terms of biological role, catalyzes the initial step of the lipid cycle reactions in the biosynthesis of the cell wall peptidoglycan: transfers peptidoglycan precursor phospho-MurNAc-pentapeptide from UDP-MurNAc-pentapeptide onto the lipid carrier undecaprenyl phosphate, yielding undecaprenyl-pyrophosphoryl-MurNAc-pentapeptide, known as lipid I. In Bifidobacterium adolescentis (strain ATCC 15703 / DSM 20083 / NCTC 11814 / E194a), this protein is Phospho-N-acetylmuramoyl-pentapeptide-transferase.